The chain runs to 283 residues: Bifunctional protein FolD (283 aa).

NADP(+) is bound by residues 166–168 and Ile-232; that span reads GAS.

This sequence belongs to the tetrahydrofolate dehydrogenase/cyclohydrolase family. In terms of assembly, homodimer.

It catalyses the reaction (6R)-5,10-methylene-5,6,7,8-tetrahydrofolate + NADP(+) = (6R)-5,10-methenyltetrahydrofolate + NADPH. The enzyme catalyses (6R)-5,10-methenyltetrahydrofolate + H2O = (6R)-10-formyltetrahydrofolate + H(+). It functions in the pathway one-carbon metabolism; tetrahydrofolate interconversion. Catalyzes the oxidation of 5,10-methylenetetrahydrofolate to 5,10-methenyltetrahydrofolate and then the hydrolysis of 5,10-methenyltetrahydrofolate to 10-formyltetrahydrofolate. The protein is Bifunctional protein FolD of Wigglesworthia glossinidia brevipalpis.